The following is a 369-amino-acid chain: Histone deacetylase-like amidohydrolase (369 aa).

His-143 serves as the catalytic Proton donor/acceptor. The Zn(2+) site is built by Asp-180, His-182, and Asp-268.

This sequence belongs to the histone deacetylase family. As to quaternary structure, homotetramer; dimer of dimers. Zn(2+) is required as a cofactor.

Zinc, and cobalt and nickel at a lesser extent, are able to increase the catalytic activity (2.2-, 1.3- and 1.1-fold respectively) at concentrations of 1 mM. Higher concentrations have an inhibitory effect. Magnesium, manganese and calcium have no effect on activity at concentrations between 0 and 10 mM. At 100 mM, the catalytic activity is increased between 1.2- and 2.1-fold. Hydroxamates like TSA and SAHA inhibit the enzyme. Is also inhibited by azobenzenes, stilbenes and arylazopyrazoles. Exhibits significant levels of protein deacetylase activity comparable to those of eukaryotic HDACs in assays both with fluorogenic peptidic substrates and acetate-radiolabeled histones. Accepts proteins with epsilon-acetylated lysine residues and tritiated-acetate-prelabeled chicken histones as substrates. The natural substrate protein is not yet known. The chain is Histone deacetylase-like amidohydrolase (hdaH) from Alcaligenes sp. (strain DSM 11172) (Bordetella sp. (strain FB188)).